Here is a 169-residue protein sequence, read N- to C-terminus: MQALNHFSRIRLSWFLLLLCIIFFEASALTFQHIMKLPPCVMCIYERVAMMGIGGAAIIGLLNPNNLIIRWCGFIAWGISAGWGLKLALEHVDFQLNPSPFSTCDLFVTFPSWAPLNKWAPWMFEAYGDCSKIVWQFLTLTMPQWLVIIFAGNLIALAIFVIAQFFNKK.

The Cytoplasmic portion of the chain corresponds to 1 to 13; it reads MQALNHFSRIRLS. Residues 14–30 traverse the membrane as a helical segment; it reads WFLLLLCIIFFEASALT. Residues 31 to 48 are Periplasmic-facing; the sequence is FQHIMKLPPCVMCIYERV. C40 and C43 are disulfide-bonded. The helical transmembrane segment at 49 to 64 threads the bilayer; that stretch reads AMMGIGGAAIIGLLNP. The Cytoplasmic portion of the chain corresponds to 65 to 71; the sequence is NNLIIRW. Residues 72–89 traverse the membrane as a helical segment; the sequence is CGFIAWGISAGWGLKLAL. Topologically, residues 90–144 are periplasmic; the sequence is EHVDFQLNPSPFSTCDLFVTFPSWAPLNKWAPWMFEAYGDCSKIVWQFLTLTMPQ. The cysteines at positions 104 and 130 are disulfide-linked. The helical transmembrane segment at 145–163 threads the bilayer; sequence WLVIIFAGNLIALAIFVIA. Over 164-169 the chain is Cytoplasmic; it reads QFFNKK.

This sequence belongs to the DsbB family.

The protein resides in the cell inner membrane. In terms of biological role, required for disulfide bond formation in some periplasmic proteins. Acts by oxidizing the DsbA protein. The polypeptide is Disulfide bond formation protein B (Aliivibrio fischeri (strain ATCC 700601 / ES114) (Vibrio fischeri)).